The primary structure comprises 280 residues: Nucleotide-binding protein Mfla_0145 (280 aa).

Residue 8 to 15 (GLSGSGKS) participates in ATP binding. 57 to 60 (DTRS) provides a ligand contact to GTP.

The protein belongs to the RapZ-like family.

In terms of biological role, displays ATPase and GTPase activities. The chain is Nucleotide-binding protein Mfla_0145 from Methylobacillus flagellatus (strain ATCC 51484 / DSM 6875 / VKM B-1610 / KT).